Reading from the N-terminus, the 317-residue chain is MTTALDQLKQYTTVVADTGDFQQLAQYKPQDATTNPSLILKAVQKDAYKPILEKTVRDHRNESTDFIIDRLLIAFGTEILKLIPGRVSTEVDARLSFDTQRSIDKGRELIKLYEAAGIGRERILIKLASTWEGIRAAQVLQQEGIKCNMTLLFSLVQAAACAEAGAQLISPFVGRIYDWYKKQAGADWDEAKDGGANDPGVQSVRRIYTYYKTFGYHTEVMGASFRTTSQIIELAGCDLLTISPDLLQKLQDSNDPVERKLSPDALHDKPTERVAIDEASFRFQLNDDAMATEKLAEGIRVFAADAVKLEKLIAALR.

The active-site Schiff-base intermediate with substrate is Lys126.

It belongs to the transaldolase family. Type 1 subfamily. In terms of assembly, homodimer.

Its subcellular location is the cytoplasm. It carries out the reaction D-sedoheptulose 7-phosphate + D-glyceraldehyde 3-phosphate = D-erythrose 4-phosphate + beta-D-fructose 6-phosphate. It functions in the pathway carbohydrate degradation; pentose phosphate pathway; D-glyceraldehyde 3-phosphate and beta-D-fructose 6-phosphate from D-ribose 5-phosphate and D-xylulose 5-phosphate (non-oxidative stage): step 2/3. Its function is as follows. Transaldolase is important for the balance of metabolites in the pentose-phosphate pathway. This chain is Transaldolase, found in Burkholderia vietnamiensis (strain G4 / LMG 22486) (Burkholderia cepacia (strain R1808)).